A 611-amino-acid chain; its full sequence is Muscarinic acetylcholine receptor gar-3 (611 aa).

At 1-67 (MQSSSLGNAD…LLGEEGRMVM (67 aa)) the chain is on the extracellular side. N-linked (GlcNAc...) asparagine glycosylation is found at Asn-28 and Asn-33. The chain crosses the membrane as a helical span at residues 68–88 (IVVIGAMFALVTSLGNLMVMV). Topologically, residues 89 to 101 (SFKIDKQLQTISN) are cytoplasmic. The helical transmembrane segment at 102-122 (YFLFSLAVADIAIGVISIPMF) threads the bilayer. Residues 123–140 (TYYTAIQKWDLGYTMCQF) are Extracellular-facing. A disulfide bridge connects residues Cys-138 and Cys-218. The helical transmembrane segment at 141–161 (WLCIDYLMSNASVLNLLLISF) threads the bilayer. At 162–181 (DRYFSVTRPLSYRPRRTTKK) the chain is on the cytoplasmic side. Residues 182–202 (ALTMIACTYIISLILWPPWII) form a helical membrane-spanning segment. The Extracellular portion of the chain corresponds to 203-227 (SWPYIEGKFTAEPGTCVVQFLQTNP). The helical transmembrane segment at 228 to 248 (YVTVGTAVAAFYLPVTIMCIL) threads the bilayer. The Cytoplasmic portion of the chain corresponds to 249 to 525 (YTRVYWETQK…RKQESKAAKT (277 aa)). Disordered stretches follow at residues 299–364 (RRSM…SSEA), 377–432 (SHFA…NNNS), 446–477 (SRPS…NSEI), and 500–519 (FSSQ…RKQE). Residues 307–317 (SSTSIIKSSGS) show a composition bias toward low complexity. Basic and acidic residues predominate over residues 503–519 (QERKSEKEQRKNERKQE). Residues 526–546 (LSAILCAFIATWTPYNLIVCW) form a helical membrane-spanning segment. The Extracellular portion of the chain corresponds to 547–557 (EAFFPNTVPNV). A helical membrane pass occupies residues 558–578 (LWTFSYFLCYINSTINPLCYA). Topologically, residues 579–611 (LCNARFRHTYMRILRCKFKAERPTMNQGYVRRN) are cytoplasmic.

This sequence belongs to the G-protein coupled receptor 1 family. Muscarinic acetylcholine receptor subfamily.

Its subcellular location is the cell membrane. In terms of biological role, the muscarinic acetylcholine receptor mediates various cellular responses, including inhibition of adenylate cyclase, breakdown of phosphoinositides and modulation of potassium channels through the action of G proteins. Primary transducing effect is Pi turnover. Enhances the release of the neurotransmitter acetlycholine in cholinergic motor neurons, which in turn positively feeds back to depolarize body wall muscles and allows for the maintenance of normal body posture and locomotion. This is Muscarinic acetylcholine receptor gar-3 (gar-3) from Caenorhabditis elegans.